A 338-amino-acid polypeptide reads, in one-letter code: Tetraacyldisaccharide 4'-kinase (338 aa).

Position 63-70 (T63–T70) interacts with ATP.

The protein belongs to the LpxK family.

The catalysed reaction is a lipid A disaccharide + ATP = a lipid IVA + ADP + H(+). The protein operates within glycolipid biosynthesis; lipid IV(A) biosynthesis; lipid IV(A) from (3R)-3-hydroxytetradecanoyl-[acyl-carrier-protein] and UDP-N-acetyl-alpha-D-glucosamine: step 6/6. Transfers the gamma-phosphate of ATP to the 4'-position of a tetraacyldisaccharide 1-phosphate intermediate (termed DS-1-P) to form tetraacyldisaccharide 1,4'-bis-phosphate (lipid IVA). The chain is Tetraacyldisaccharide 4'-kinase from Hahella chejuensis (strain KCTC 2396).